The chain runs to 369 residues: MPTPAHLSKDPHYFDFRAARRVPETHAWPGLHDHPVVDGSGAGGEPDAVPVVDMRDPFAAEAVGLAAQDWGAFLLVGHGVPLDLLVRVEAAIAGMFALPASEKMRAVRRPGDSCGYGSPPISSFFSKCMWSEGYTFSPANLRSDLRKLWPKAGHDYRHFCAVMEEFHREMRALADKLLELFLVALGLTGEQVAAVESEQKIAETMTATMHLNWYPKCPDPKRALGLIAHTDSGFFTFVLQSLVPGLQLFRHGPDRWVTVPAVPGAMVVNVGDLFQILTNGRFHSVYHRAVVNRESDRISLGYFLGPPAHVKVAPLREALAGTPAAYRAVTWPEYMGVRKKAFTTGASALKMVAISTDDAANDTDDLILS.

The region spanning 205-306 is the Fe2OG dioxygenase domain; the sequence is MTATMHLNWY…RISLGYFLGP (102 aa). 3 residues coordinate Fe cation: histidine 229, aspartate 231, and histidine 287. Arginine 297 is an active-site residue.

Belongs to the iron/ascorbate-dependent oxidoreductase family. GA3OX subfamily. L-ascorbate serves as cofactor. It depends on Fe cation as a cofactor.

It carries out the reaction gibberellin A20 + 2-oxoglutarate + O2 = gibberellin A1 + succinate + CO2. Converts the inactive gibberellin precursors GA9 and GA20 in the bioactives gibberellins GA4 and GA1. The sequence is that of Gibberellin 3-beta-dioxygenase 2-3 (GA3ox2-3) from Triticum aestivum (Wheat).